The primary structure comprises 185 residues: Elongation factor P (185 aa).

Belongs to the elongation factor P family.

The protein localises to the cytoplasm. The protein operates within protein biosynthesis; polypeptide chain elongation. Functionally, involved in peptide bond synthesis. Stimulates efficient translation and peptide-bond synthesis on native or reconstituted 70S ribosomes in vitro. Probably functions indirectly by altering the affinity of the ribosome for aminoacyl-tRNA, thus increasing their reactivity as acceptors for peptidyl transferase. This is Elongation factor P from Caldicellulosiruptor saccharolyticus (strain ATCC 43494 / DSM 8903 / Tp8T 6331).